Reading from the N-terminus, the 124-residue chain is U33-theraphotoxin-Cg1c (124 aa).

A signal peptide spans 1–17 (MKFAVAIAFTLLVCVFA). 5 cysteine pairs are disulfide-bonded: C26-C37, C31-C51, C36-C75, C61-C83, and C77-C94. A compositionally biased stretch (basic and acidic residues) spans 93–108 (RCQEESGKSDKSKESQ). The disordered stretch occupies residues 93 to 124 (RCQEESGKSDKSKESQGSDESEESEESKESSG). Positions 109–118 (GSDESEESEE) are enriched in acidic residues.

This sequence belongs to the neurotoxin 32 family. Expressed by the venom gland.

Its subcellular location is the secreted. The polypeptide is U33-theraphotoxin-Cg1c (Chilobrachys guangxiensis (Chinese earth tiger tarantula)).